Reading from the N-terminus, the 148-residue chain is MLDELDKRILYFLQEDGRRSYSEIARILGVPESTVRVRVKKMLKNGIIRKFAALINPFKAGYEIVAVIAVDVEPNKVREVAEKLAELNEVDVLGIATGAHDIFMQVTVKSLRELEEFLLDKLGKIEGIKSTETSILTSVKKWGYARVF.

The HTH asnC-type domain occupies 2 to 63; the sequence is LDELDKRILY…LINPFKAGYE (62 aa). The H-T-H motif DNA-binding region spans 21 to 40; it reads YSEIARILGVPESTVRVRVK.

This is an uncharacterized protein from Pyrococcus furiosus (strain ATCC 43587 / DSM 3638 / JCM 8422 / Vc1).